The chain runs to 497 residues: PHD finger protein 10 (497 aa).

The segment covering 1–13 has biased composition (low complexity); that stretch reads MTAAGPGAAPSPG. Residues 1 to 61 are disordered; sequence MTAAGPGAAP…SSRSCETSSQ (61 aa). Phosphoserine is present on residues serine 11, serine 35, and serine 49. Positions 88-184 are essential to induce neural progenitor proliferation; the sequence is MLQEQVSEYL…HYKEYSQMQQ (97 aa). Residues 88–294 are SAY; the sequence is MLQEQVSEYL…PPLDPELPAL (207 aa). Residue lysine 240 forms a Glycyl lysine isopeptide (Lys-Gly) (interchain with G-Cter in SUMO2) linkage. Serine 269 bears the Phosphoserine mark. Over residues 284–295 the composition is skewed to low complexity; the sequence is EPPLDPELPALD. The disordered stretch occupies residues 284–368; it reads EPPLDPELPA…RSVLSKSAPG (85 aa). The tract at residues 291 to 333 is essential to induce neural progenitor proliferation; the sequence is LPALDSDGDSDDGEDGGGDEKRKNKGTSDSSSGNVSEGDSPPD. Phosphoserine is present on residues serine 296, serine 300, serine 326, and serine 330. Residues 296–307 are compositionally biased toward acidic residues; that stretch reads SDGDSDDGEDGG. Residues 317 to 327 show a composition bias toward polar residues; it reads TSDSSSGNVSE. Residues 337–358 are compositionally biased toward basic and acidic residues; it reads DTFHGRQKSKDKMATPRKDGSK. A PHD-type 1; degenerate zinc finger spans residues 378 to 435; the sequence is LCGICLKGKESNKKGKAESLIHCSQCDNSGHPSCLDMTMELVSMIKTYPWQCMECKTC. Lysine 384 participates in a covalent cross-link: Glycyl lysine isopeptide (Lys-Gly) (interchain with G-Cter in SUMO2). Residues 437–480 form a PHD-type 2; degenerate zinc finger; it reads ICGQPHHEEEMMFCDVCDRGYHTFCVGLGAIPSGRWICDCCQRA.

This sequence belongs to the SAYP family. As to quaternary structure, component of neural progenitors-specific chromatin remodeling complex (npBAF complex) composed of at least, ARID1A/BAF250A or ARID1B/BAF250B, SMARCD1/BAF60A, SMARCD3/BAF60C, SMARCA2/BRM/BAF190B, SMARCA4/BRG1/BAF190A, SMARCB1/BAF47, SMARCC1/BAF155, SMARCE1/BAF57, SMARCC2/BAF170, PHF10/BAF45A, ACTL6A/BAF53A and actin. Interacts with ACTL6A/BAF53A, SMARCA2/BRM/BAF190B, SMARCA4/BRG1/BAF190A and PBRM1/BAF180. Widely expressed. Expressed selectively in neural stem and progenitor cells (at protein level).

It localises to the nucleus. Involved in transcription activity regulation by chromatin remodeling. Belongs to the neural progenitors-specific chromatin remodeling complex (npBAF complex) and is required for the proliferation of neural progenitors. During neural development a switch from a stem/progenitor to a post-mitotic chromatin remodeling mechanism occurs as neurons exit the cell cycle and become committed to their adult state. The transition from proliferating neural stem/progenitor cells to post-mitotic neurons requires a switch in subunit composition of the npBAF and nBAF complexes. As neural progenitors exit mitosis and differentiate into neurons, npBAF complexes which contain ACTL6A/BAF53A and PHF10/BAF45A, are exchanged for homologous alternative ACTL6B/BAF53B and DPF1/BAF45B or DPF3/BAF45C subunits in neuron-specific complexes (nBAF). The npBAF complex is essential for the self-renewal/proliferative capacity of the multipotent neural stem cells. The nBAF complex along with CREST plays a role regulating the activity of genes essential for dendrite growth. The sequence is that of PHD finger protein 10 (Phf10) from Mus musculus (Mouse).